A 163-amino-acid chain; its full sequence is Putative pre-16S rRNA nuclease (163 aa).

It belongs to the YqgF nuclease family.

It localises to the cytoplasm. Could be a nuclease involved in processing of the 5'-end of pre-16S rRNA. The chain is Putative pre-16S rRNA nuclease from Nitrobacter hamburgensis (strain DSM 10229 / NCIMB 13809 / X14).